A 332-amino-acid chain; its full sequence is 2-oxoglutarate-dependent dioxygenase FG08081 (332 aa).

A Fe2OG dioxygenase domain is found at 176-280 (RSKSTLYFLH…RYSISYFLRA (105 aa)). Fe cation is bound by residues H201, D203, and H258. R271 is a binding site for 2-oxoglutarate.

The protein belongs to the iron/ascorbate-dependent oxidoreductase family. Requires Fe(2+) as cofactor.

It participates in mycotoxin biosynthesis. 2-oxoglutarate-dependent dioxygenase; part of the gene cluster that mediates the biosynthesis of butenolide, a mycotoxin that shows antibiotic activity but does not seem to play a major role in the spread of head blight in wheat. Butenolide is derived from glutamic acid via a 4-acetamido-2-butenoic acid intermediate. The predicted function of the NADH:flavin oxidoreductase FG08077, the cytochrome P450 monooxygenase FG08079, the decarboxylase FG08083, and the putative acetyltransferase FG08082 are consistent with this pathway, however, the respective activities of the butelonide biosynthesis cluster enzymes have still to be experimentally determined. The polypeptide is 2-oxoglutarate-dependent dioxygenase FG08081 (Gibberella zeae (strain ATCC MYA-4620 / CBS 123657 / FGSC 9075 / NRRL 31084 / PH-1) (Wheat head blight fungus)).